Reading from the N-terminus, the 315-residue chain is Homoserine kinase (315 aa).

97 to 107 (PPARGLGSSAT) contributes to the ATP binding site.

Belongs to the GHMP kinase family. Homoserine kinase subfamily.

It localises to the cytoplasm. It catalyses the reaction L-homoserine + ATP = O-phospho-L-homoserine + ADP + H(+). It participates in amino-acid biosynthesis; L-threonine biosynthesis; L-threonine from L-aspartate: step 4/5. Its function is as follows. Catalyzes the ATP-dependent phosphorylation of L-homoserine to L-homoserine phosphate. The sequence is that of Homoserine kinase from Prochlorococcus marinus (strain MIT 9215).